Here is a 310-residue protein sequence, read N- to C-terminus: Phosphoribosylaminoimidazole-succinocarboxamide synthase (310 aa).

The protein belongs to the SAICAR synthetase family.

The catalysed reaction is 5-amino-1-(5-phospho-D-ribosyl)imidazole-4-carboxylate + L-aspartate + ATP = (2S)-2-[5-amino-1-(5-phospho-beta-D-ribosyl)imidazole-4-carboxamido]succinate + ADP + phosphate + 2 H(+). Its pathway is purine metabolism; IMP biosynthesis via de novo pathway; 5-amino-1-(5-phospho-D-ribosyl)imidazole-4-carboxamide from 5-amino-1-(5-phospho-D-ribosyl)imidazole-4-carboxylate: step 1/2. The sequence is that of Phosphoribosylaminoimidazole-succinocarboxamide synthase from Xanthomonas oryzae pv. oryzae (strain MAFF 311018).